We begin with the raw amino-acid sequence, 891 residues long: Aconitate hydratase A (891 aa).

Residues Cys435, Cys501, and Cys504 each contribute to the [4Fe-4S] cluster site.

The protein belongs to the aconitase/IPM isomerase family. As to quaternary structure, monomer. [4Fe-4S] cluster serves as cofactor.

It catalyses the reaction citrate = D-threo-isocitrate. It carries out the reaction (2S,3R)-3-hydroxybutane-1,2,3-tricarboxylate = 2-methyl-cis-aconitate + H2O. It participates in carbohydrate metabolism; tricarboxylic acid cycle; isocitrate from oxaloacetate: step 2/2. It functions in the pathway organic acid metabolism; propanoate degradation. Functionally, involved in the catabolism of short chain fatty acids (SCFA) via the tricarboxylic acid (TCA)(acetyl degradation route) and the 2-methylcitrate cycle I (propionate degradation route). Catalyzes the reversible isomerization of citrate to isocitrate via cis-aconitate. Also catalyzes the hydration of 2-methyl-cis-aconitate to yield (2R,3S)-2-methylisocitrate. The (2S,3S)-2-methylcitrate (2-MC) is a very poor substrate. The apo form of AcnA functions as a RNA-binding regulatory protein. This Salmonella typhimurium (strain LT2 / SGSC1412 / ATCC 700720) protein is Aconitate hydratase A (acnA).